A 137-amino-acid chain; its full sequence is Small ribosomal subunit protein uS9 (137 aa).

Residues 114–137 (DSRMKERKKPGLRGARRGVQFSKR) are disordered. Residues 118–137 (KERKKPGLRGARRGVQFSKR) show a composition bias toward basic residues.

The protein belongs to the universal ribosomal protein uS9 family.

The protein is Small ribosomal subunit protein uS9 of Rhodopirellula baltica (strain DSM 10527 / NCIMB 13988 / SH1).